Consider the following 134-residue polypeptide: Large ribosomal subunit protein bL20 (134 aa).

Belongs to the bacterial ribosomal protein bL20 family.

Binds directly to 23S ribosomal RNA and is necessary for the in vitro assembly process of the 50S ribosomal subunit. It is not involved in the protein synthesizing functions of that subunit. The polypeptide is Large ribosomal subunit protein bL20 (Rhizobium leguminosarum bv. trifolii (strain WSM2304)).